The following is a 349-amino-acid chain: E3 ubiquitin-protein ligase rnf146 (349 aa).

The disordered stretch occupies residues 1–21 (MASCGEVDHSVSSLPSSKKGS). Low complexity predominate over residues 10–21 (SVSSLPSSKKGS). The segment at 41 to 79 (CAICLQSCVHPVQLPCRHVFCFLCVKGASWQSKRCALCR) adopts an RING-type zinc-finger fold. Residues 97–173 (ELKTGGRGAT…EHGRRRKIKR (77 aa)) form the WWE domain. A glycoprotein contacts are provided by Tyr-113, Arg-116, Trp-120, Tyr-150, Gln-159, Arg-169, and Lys-181. 2 disordered regions span residues 226 to 251 (TTVLSAPARPPTSLGGQPGSPTSPSL) and 264 to 349 (DAPE…CTEV). Positions 283-292 (SMSSSPNTYA) are enriched in polar residues. A compositionally biased stretch (acidic residues) spans 298–307 (WSDDEGDGEA). Positions 308-317 (VEPREQRLRL) are enriched in basic and acidic residues.

It is found in the cytoplasm. The protein localises to the cytosol. Its subcellular location is the nucleus. The catalysed reaction is S-ubiquitinyl-[E2 ubiquitin-conjugating enzyme]-L-cysteine + [acceptor protein]-L-lysine = [E2 ubiquitin-conjugating enzyme]-L-cysteine + N(6)-ubiquitinyl-[acceptor protein]-L-lysine.. The protein operates within protein modification; protein ubiquitination. In terms of biological role, E3 ubiquitin-protein ligase that specifically binds poly-ADP-ribosylated proteins and mediates their ubiquitination and subsequent degradation. May regulate many important biological processes, such as cell survival and DNA damage response. Acts as an activator of the Wnt signaling pathway by mediating the ubiquitination of poly-ADP-ribosylated proteins. Neuroprotective protein. Protects against cell death induced by DNA damaging agents and rescues cells from G1 arrest. Promotes cell survival after gamma-irradiation. Facilitates DNA repair. This chain is E3 ubiquitin-protein ligase rnf146 (rnf146), found in Salmo salar (Atlantic salmon).